Consider the following 378-residue polypeptide: Heat-inducible transcription repressor HrcA (378 aa).

The protein belongs to the HrcA family.

Functionally, negative regulator of class I heat shock genes (grpE-dnaK-dnaJ and groELS operons). Prevents heat-shock induction of these operons. This chain is Heat-inducible transcription repressor HrcA, found in Synechocystis sp. (strain ATCC 27184 / PCC 6803 / Kazusa).